Here is a 1080-residue protein sequence, read N- to C-terminus: Zorya protein ZorD (1080 aa).

One can recognise a Helicase ATP-binding domain in the interval Leu-596 to Gly-779. The 166-residue stretch at Lys-904–Ser-1069 folds into the Helicase C-terminal domain.

Functionally, component of antiviral defense system Zorya type I, composed of ZorA, ZorB, ZorC and ZorD. Expression of Zorya type I in E.coli (strain MG1655) confers 10,000-fold resistance to phage SECphi27, 100-fold resistance to lambda, and 10-fold resistance to T7. While most T7 infected Zorya-containing cells undergo abortive infection, a minority produce viable phage progeny. These eventually accumulate to a high multiplicity of infection, leading to culture collapse by 2 hours after initial infection. ZorA and ZorB probably assemble in the cell inner membrane and exert their effect there. This may have ATPase activity. This is Zorya protein ZorD from Escherichia coli O139:H28 (strain E24377A / ETEC).